The following is a 202-amino-acid chain: ATP-dependent Clp protease proteolytic subunit 1 (202 aa).

The Nucleophile role is filled by serine 99. The active site involves histidine 123.

Belongs to the peptidase S14 family. Fourteen ClpP subunits assemble into 2 heptameric rings which stack back to back to give a disk-like structure with a central cavity, resembling the structure of eukaryotic proteasomes.

It localises to the cytoplasm. It catalyses the reaction Hydrolysis of proteins to small peptides in the presence of ATP and magnesium. alpha-casein is the usual test substrate. In the absence of ATP, only oligopeptides shorter than five residues are hydrolyzed (such as succinyl-Leu-Tyr-|-NHMec, and Leu-Tyr-Leu-|-Tyr-Trp, in which cleavage of the -Tyr-|-Leu- and -Tyr-|-Trp bonds also occurs).. Its function is as follows. Cleaves peptides in various proteins in a process that requires ATP hydrolysis. Has a chymotrypsin-like activity. Plays a major role in the degradation of misfolded proteins. This chain is ATP-dependent Clp protease proteolytic subunit 1, found in Symbiobacterium thermophilum (strain DSM 24528 / JCM 14929 / IAM 14863 / T).